A 275-amino-acid polypeptide reads, in one-letter code: MNKQAIDALLQKINDSAINEGNPRTKQIVNRIVRDLFYTIEDLDVQPDEFWTALNYLGDAGRSGELGLLAAGLGFEHFLDLRMDEAEAKAGVEGGTPRTIEGPLYVAGAPVSDGHARLDDGTDPGQTLVMRGRVFGEDGKPLANALVEVWHANHLGNYSYFDKSQPAFNLRRSIRTDAEGKYSFRSVVPVGYSVPPQGQTQLLLDQLGRHGHRPAHIHFFVSAPGFRKLTTQINIDGDPYLWDDFAFATRDGLVPAVRQAEVRKANRTAWTVSSR.

Positions 158, 192, 216, and 218 each coordinate Fe cation.

It belongs to the intradiol ring-cleavage dioxygenase family. As to quaternary structure, homodimer. It depends on Fe(3+) as a cofactor.

The catalysed reaction is catechol + O2 = cis,cis-muconate + 2 H(+). Its pathway is aromatic compound metabolism; beta-ketoadipate pathway; 5-oxo-4,5-dihydro-2-furylacetate from catechol: step 1/3. Functionally, can cleave 4-methyl-, 4-chloro-, and 3-methoxycatechol at lower rates than catechol, but has no activity with 4-nitrocatechol or protocatechuic acid. The protein is Catechol 1,2-dioxygenase 2 (catA2) of Acinetobacter lwoffii.